Reading from the N-terminus, the 339-residue chain is Histidine protein methyltransferase 1 (339 aa).

Phosphoserine occurs at positions 333 and 338.

This sequence belongs to the methyltransferase superfamily. METTL18 family.

It is found in the cytoplasm. Its subcellular location is the nucleus. It catalyses the reaction L-histidyl-[protein] + S-adenosyl-L-methionine = N(tele)-methyl-L-histidyl-[protein] + S-adenosyl-L-homocysteine + H(+). In terms of biological role, protein-histidine N-methyltransferase that mediates methylation of target protein on His residues. This chain is Histidine protein methyltransferase 1, found in Schizosaccharomyces pombe (strain 972 / ATCC 24843) (Fission yeast).